The chain runs to 123 residues: Ribosome-binding factor A (123 aa).

The protein belongs to the RbfA family. As to quaternary structure, monomer. Binds 30S ribosomal subunits, but not 50S ribosomal subunits or 70S ribosomes.

The protein resides in the cytoplasm. Its function is as follows. One of several proteins that assist in the late maturation steps of the functional core of the 30S ribosomal subunit. Associates with free 30S ribosomal subunits (but not with 30S subunits that are part of 70S ribosomes or polysomes). Required for efficient processing of 16S rRNA. May interact with the 5'-terminal helix region of 16S rRNA. The polypeptide is Ribosome-binding factor A (Cupriavidus metallidurans (strain ATCC 43123 / DSM 2839 / NBRC 102507 / CH34) (Ralstonia metallidurans)).